The chain runs to 126 residues: Flagellar protein FliT (126 aa).

A required for homodimerization region spans residues 1–50 (MVSPHRLLKDYQQLLSLSQKILHLAISGQWDTLVEQEIVYVQSVEGLVNT). The interval 60-98 (MRLHLRQILQEVMDNEAKVKQLLQKRMDELSSLMGQSLK) is fliD binding.

This sequence belongs to the FliT family. As to quaternary structure, homodimer. Interacts with FliD and FlhC.

The protein resides in the cytoplasm. It localises to the cytosol. Dual-function protein that regulates the transcription of class 2 flagellar operons and that also acts as an export chaperone for the filament-capping protein FliD. As a transcriptional regulator, acts as an anti-FlhDC factor; it directly binds FlhC, thus inhibiting the binding of the FlhC/FlhD complex to class 2 promoters, resulting in decreased expression of class 2 flagellar operons. As a chaperone, effects FliD transition to the membrane by preventing its premature polymerization, and by directing it to the export apparatus. This is Flagellar protein FliT from Pectobacterium atrosepticum (strain SCRI 1043 / ATCC BAA-672) (Erwinia carotovora subsp. atroseptica).